A 428-amino-acid polypeptide reads, in one-letter code: L-rhamnose isomerase (428 aa).

His260, Asp292, and Asp294 together coordinate Mn(2+).

Belongs to the rhamnose isomerase family. Mn(2+) is required as a cofactor.

It is found in the cytoplasm. The enzyme catalyses L-rhamnopyranose = L-rhamnulose. The protein operates within carbohydrate degradation; L-rhamnose degradation; glycerone phosphate from L-rhamnose: step 1/3. Its function is as follows. Catalyzes the interconversion of L-rhamnose and L-rhamnulose. This Enterococcus faecalis (strain ATCC 700802 / V583) protein is L-rhamnose isomerase.